The chain runs to 261 residues: Homeobox protein ceh-33 (261 aa).

The homeobox DNA-binding region spans 133-192 (GEETSYCFRDKSRVLLRDWYCRNSYPSPREKRELAEKTHLTVTQVSNWFKNRRQRDRAGV).

It belongs to the SIX/Sine oculis homeobox family.

The protein localises to the nucleus. This Caenorhabditis elegans protein is Homeobox protein ceh-33 (ceh-33).